A 196-amino-acid polypeptide reads, in one-letter code: Small ribosomal subunit protein uS4m (196 aa).

The region spanning 88–154 is the S4 RNA-binding domain; the sequence is KRLDVILVRL…FKSNIRKNFQ (67 aa).

Belongs to the universal ribosomal protein uS4 family.

It localises to the mitochondrion. In Marchantia polymorpha (Common liverwort), this protein is Small ribosomal subunit protein uS4m (RPS4).